Reading from the N-terminus, the 666-residue chain is uncharacterized protein (666 aa).

This sequence belongs to the MG032/MG096/MG288 family.

This is an uncharacterized protein from Mycoplasma pneumoniae (strain ATCC 29342 / M129 / Subtype 1) (Mycoplasmoides pneumoniae).